Consider the following 96-residue polypeptide: DNA-directed RNA polymerase subunit Rpo11 (96 aa).

This sequence belongs to the archaeal Rpo11/eukaryotic RPB11/RPC19 RNA polymerase subunit family. In terms of assembly, part of the RNA polymerase complex.

The protein resides in the cytoplasm. The enzyme catalyses RNA(n) + a ribonucleoside 5'-triphosphate = RNA(n+1) + diphosphate. DNA-dependent RNA polymerase (RNAP) catalyzes the transcription of DNA into RNA using the four ribonucleoside triphosphates as substrates. The protein is DNA-directed RNA polymerase subunit Rpo11 of Methanococcus maripaludis (strain C6 / ATCC BAA-1332).